The following is a 196-amino-acid chain: uncharacterized protein (196 aa).

This is an uncharacterized protein from Mycoplasma genitalium (strain ATCC 33530 / DSM 19775 / NCTC 10195 / G37) (Mycoplasmoides genitalium).